Reading from the N-terminus, the 205-residue chain is MELYTALLAVTILSPSSIVGLPGECSVNVIPKKNLDKAKFFSGTWYETHYLDMDPQATEKFCFSFAPRESGGTVKEALYHFNVDSKVSFYNTGTGPLESNGAKYTAKFNTVDKKGKEIKPADEKYSYTVTVIEAAKQSALIHICLQEDGKDIGDLYSVLNRNKNALPNKKIKKALNKVSLVLTKFVVTKDLDCKYDDKFLSSWQK.

An N-terminal signal peptide occupies residues 1-20 (MELYTALLAVTILSPSSIVG). Cystine bridges form between cysteine 25/cysteine 144 and cysteine 62/cysteine 193. Aspartate 52 is a binding site for histamine. 2 residues coordinate heme: histidine 80 and asparagine 91. Residue aspartate 154 coordinates histamine.

The protein belongs to the calycin superfamily. Nitrophorin family. Forms oligomers (at pH 5.5). Heme b serves as cofactor. In terms of tissue distribution, expressed in the endothelial cells of the salivary glands.

The protein localises to the secreted. The enzyme catalyses 3 nitrite + 2 H(+) = 2 nitric oxide + nitrate + H2O. In terms of biological role, converts nitrite as the sole substrate to form nitric oxide gas (NO). NO(2-) serves both as an electron donor and as an electron acceptor. Binds to negatively charged cell surfaces of activated platelets; binds to L-a-phosphatidyl-L-serine (PS)-bearing phospholipid membranes. Once bound on an activated platelet, NP7 releases its stored nitric oxide gas (NO) into the victim's tissues while feeding, resulting in vasodilation and inhibition of platelet aggregation. Also acts as an anticoagulant by blocking coagulation-factor binding sites. Has antihistamine activity; binds histamine with high affinity. The sequence is that of Nitrophorin-7 from Rhodnius prolixus (Triatomid bug).